The sequence spans 86 residues: Small ribosomal subunit protein uS15 (86 aa).

A disordered region spans residues 1-22; that stretch reads MSVDTQKVIEDNKRSAQDTGSP. Residues 7 to 16 are compositionally biased toward basic and acidic residues; it reads KVIEDNKRSA.

This sequence belongs to the universal ribosomal protein uS15 family. In terms of assembly, part of the 30S ribosomal subunit. Forms a bridge to the 50S subunit in the 70S ribosome, contacting the 23S rRNA.

In terms of biological role, one of the primary rRNA binding proteins, it binds directly to 16S rRNA where it helps nucleate assembly of the platform of the 30S subunit by binding and bridging several RNA helices of the 16S rRNA. Forms an intersubunit bridge (bridge B4) with the 23S rRNA of the 50S subunit in the ribosome. In Xanthomonas axonopodis pv. citri (strain 306), this protein is Small ribosomal subunit protein uS15.